The chain runs to 948 residues: UvrABC system protein A (948 aa).

An ATP-binding site is contributed by 31-38; sequence GLSGSGKS. The C4-type zinc finger occupies 249–277; sequence CPNGHDIGFTELSPRMFSFNSPYGACETC. ABC transporter domains lie at 307 to 586 and 606 to 934; these read WAGS…KNSL and GNGS…QYLK. 638–645 contacts ATP; it reads GVSGSGKS. Residues 737–763 form a C4-type zinc finger; that stretch reads CETCEGDGILKIEMHFLPDVYVTCEVC.

Belongs to the ABC transporter superfamily. UvrA family. In terms of assembly, forms a heterotetramer with UvrB during the search for lesions.

It is found in the cytoplasm. In terms of biological role, the UvrABC repair system catalyzes the recognition and processing of DNA lesions. UvrA is an ATPase and a DNA-binding protein. A damage recognition complex composed of 2 UvrA and 2 UvrB subunits scans DNA for abnormalities. When the presence of a lesion has been verified by UvrB, the UvrA molecules dissociate. This chain is UvrABC system protein A, found in Leptospira interrogans serogroup Icterohaemorrhagiae serovar copenhageni (strain Fiocruz L1-130).